The primary structure comprises 507 residues: Maturase K (507 aa).

It belongs to the intron maturase 2 family. MatK subfamily.

The protein resides in the plastid. The protein localises to the chloroplast. Usually encoded in the trnK tRNA gene intron. Probably assists in splicing its own and other chloroplast group II introns. This chain is Maturase K, found in Ranunculus acris (Meadow buttercup).